The chain runs to 196 residues: dTTP/UTP pyrophosphatase (196 aa).

Catalysis depends on Asp76, which acts as the Proton acceptor.

This sequence belongs to the Maf family. YhdE subfamily. It depends on a divalent metal cation as a cofactor.

The protein resides in the cytoplasm. The enzyme catalyses dTTP + H2O = dTMP + diphosphate + H(+). The catalysed reaction is UTP + H2O = UMP + diphosphate + H(+). Its function is as follows. Nucleoside triphosphate pyrophosphatase that hydrolyzes dTTP and UTP. May have a dual role in cell division arrest and in preventing the incorporation of modified nucleotides into cellular nucleic acids. The protein is dTTP/UTP pyrophosphatase of Chlorobium chlorochromatii (strain CaD3).